A 104-amino-acid chain; its full sequence is Large ribosomal subunit protein uL24 (104 aa).

The protein belongs to the universal ribosomal protein uL24 family. Part of the 50S ribosomal subunit.

Its function is as follows. One of two assembly initiator proteins, it binds directly to the 5'-end of the 23S rRNA, where it nucleates assembly of the 50S subunit. In terms of biological role, one of the proteins that surrounds the polypeptide exit tunnel on the outside of the subunit. This is Large ribosomal subunit protein uL24 from Klebsiella pneumoniae (strain 342).